Consider the following 351-residue polypeptide: Protein FAM118B (351 aa).

Ala-2 is modified (N-acetylalanine). Residue Ser-9 is modified to Phosphoserine.

It belongs to the FAM118 family.

Its subcellular location is the nucleus. It localises to the cajal body. In terms of biological role, may play a role in Cajal bodies formation. The protein is Protein FAM118B (FAM118B) of Bos taurus (Bovine).